We begin with the raw amino-acid sequence, 431 residues long: Argininosuccinate lyase (431 aa).

The protein belongs to the lyase 1 family. Argininosuccinate lyase subfamily.

It is found in the cytoplasm. It catalyses the reaction 2-(N(omega)-L-arginino)succinate = fumarate + L-arginine. The protein operates within amino-acid biosynthesis; L-arginine biosynthesis; L-arginine from L-ornithine and carbamoyl phosphate: step 3/3. This chain is Argininosuccinate lyase, found in Xanthomonas campestris pv. campestris (strain ATCC 33913 / DSM 3586 / NCPPB 528 / LMG 568 / P 25).